The sequence spans 191 residues: Glycerol-3-phosphate acyltransferase (191 aa).

5 helical membrane-spanning segments follow: residues 5-25 (IILILSYVIGSIPFSLIIAKI), 51-71 (LAVLALFLDSLKGFVAVYTAQ), 78-98 (DLYIYVSAILAVLGHMFPIWL), 114-134 (IALNISIALAFVFVWLIVFFI), and 153-173 (SFFFQKELFLILLTVAILIFL).

Belongs to the PlsY family. As to quaternary structure, probably interacts with PlsX.

Its subcellular location is the cell membrane. It carries out the reaction an acyl phosphate + sn-glycerol 3-phosphate = a 1-acyl-sn-glycero-3-phosphate + phosphate. Its pathway is lipid metabolism; phospholipid metabolism. Functionally, catalyzes the transfer of an acyl group from acyl-phosphate (acyl-PO(4)) to glycerol-3-phosphate (G3P) to form lysophosphatidic acid (LPA). This enzyme utilizes acyl-phosphate as fatty acyl donor, but not acyl-CoA or acyl-ACP. This chain is Glycerol-3-phosphate acyltransferase, found in Wolbachia pipientis subsp. Culex pipiens (strain wPip).